A 374-amino-acid polypeptide reads, in one-letter code: MDSSSLLPSQWSDLPLDILELISDRLDHDSSDTIHLLCLRSVCATWRLSLPLSNKNNRLSKFPKYLPFWSSSSSSSGFFTLKQSNVYKLEAPLNPRTCLVKLQETTPGIMRVLDLFSNDRICFLPENFPSKIDLQEFHVRLVRRTYRMEYANNGGGAVPCFWSLHSDKVVILSSGEDSAIIAIHSGGKLGFLKSGNDEKWKILDNSWNVIYEDIMLYKDNRCIVVDDKGKTVIYDVDFKVSDLAEGLVGGGGHKKHLVECSGGEVFLVDKYVKTVWCKSDISKSVVEFRVYNLKREEKRWEEVRDLGDVALFIGDDCSFSVQNPAGDLAGGFIFYSDYRNGGRSRGICSDGDGVFNVDMQGDFVFSIKPNYFGP.

The 53-residue stretch at serine 9–lysine 61 folds into the F-box domain.

In Arabidopsis thaliana (Mouse-ear cress), this protein is Putative F-box protein At5g60060.